Here is a 258-residue protein sequence, read N- to C-terminus: Transcription cofactor vestigial-like protein 1 (258 aa).

Polar residues-rich tracts occupy residues 55-65 (PQELTPSSQSE) and 74-87 (SMSP…SPWT). The interval 55–93 (PQELTPSSQSEGVMLKNDDSMSPNQWRYSSPWTKPQPEV) is disordered.

This sequence belongs to the vestigial family. Interacts with TEFs.

Its subcellular location is the nucleus. Its function is as follows. May act as a specific coactivator for the mammalian TEFs. The polypeptide is Transcription cofactor vestigial-like protein 1 (VGLL1) (Homo sapiens (Human)).